The chain runs to 141 residues: Hemoglobin subunit alpha (141 aa).

The Globin domain occupies 1-141 (VLSPADKTNV…VSTVLTSKYR (141 aa)). Serine 3 is modified (phosphoserine). Lysine 7 is modified (N6-succinyllysine). A Phosphothreonine modification is found at threonine 8. Lysine 11 is modified (N6-succinyllysine). Lysine 16 carries the N6-acetyllysine; alternate modification. Lysine 16 is modified (N6-succinyllysine; alternate). Position 24 is a phosphotyrosine (tyrosine 24). Serine 35 carries the post-translational modification Phosphoserine. Lysine 40 is modified (N6-succinyllysine). At serine 49 the chain carries Phosphoserine. An O2-binding site is contributed by histidine 58. Heme b is bound at residue histidine 87. At serine 102 the chain carries Phosphoserine. Threonine 108 carries the phosphothreonine modification. Serine 124 is subject to Phosphoserine. Threonine 134 and threonine 137 each carry phosphothreonine. Serine 138 is subject to Phosphoserine.

This sequence belongs to the globin family. As to quaternary structure, heterotetramer of two alpha chains and two beta chains. As to expression, red blood cells.

In terms of biological role, involved in oxygen transport from the lung to the various peripheral tissues. Functionally, hemopressin acts as an antagonist peptide of the cannabinoid receptor CNR1. Hemopressin-binding efficiently blocks cannabinoid receptor CNR1 and subsequent signaling. The polypeptide is Hemoglobin subunit alpha (HBA) (Odobenus rosmarus divergens (Pacific walrus)).